The following is a 931-amino-acid chain: Phosphoenolpyruvate carboxylase (931 aa).

Residues His138 and Lys594 contribute to the active site.

The protein belongs to the PEPCase type 1 family. It depends on Mg(2+) as a cofactor.

It carries out the reaction oxaloacetate + phosphate = phosphoenolpyruvate + hydrogencarbonate. Functionally, forms oxaloacetate, a four-carbon dicarboxylic acid source for the tricarboxylic acid cycle. The sequence is that of Phosphoenolpyruvate carboxylase from Streptococcus agalactiae serotype Ia (strain ATCC 27591 / A909 / CDC SS700).